Consider the following 498-residue polypeptide: Acetylcholine receptor subunit alpha-type acr-16 (498 aa).

An N-terminal signal peptide occupies residues 1-19; the sequence is MSVCTLLISCAILAAPTLG. Over 20-230 the chain is Extracellular; the sequence is SLQERRLYED…FYLHMRRRTL (211 aa). N-linked (GlcNAc...) asparagine glycans are attached at residues asparagine 43 and asparagine 93. Intrachain disulfides connect cysteine 147–cysteine 161 and cysteine 211–cysteine 212. The next 3 helical transmembrane spans lie at 231-252, 261-279, and 295-314; these read YYGFNLIMPCILTTLMTLLGFT, ITLQITVLLSICFFLSIVS, and FFTCCMIVVTASTVFTVYVL. The Cytoplasmic segment spans residues 315–472; the sequence is NLHYRTPETH…WKFAAMVVDR (158 aa). Residues 473-493 form a helical membrane-spanning segment; the sequence is LCLYVFTIFIIVSTIGIFWSA.

It belongs to the ligand-gated ion channel (TC 1.A.9) family. Acetylcholine receptor (TC 1.A.9.1) subfamily. As to expression, expressed in the body wall muscle.

The protein resides in the postsynaptic cell membrane. Its subcellular location is the cell membrane. Functionally, after binding acetylcholine, the AChR responds by an extensive change in conformation that affects all subunits and leads to opening of an ion-conducting channel across the plasma membrane. A subunit of the levamisole-insensitive nicotinic receptor. The chain is Acetylcholine receptor subunit alpha-type acr-16 (acr-16) from Caenorhabditis elegans.